A 374-amino-acid polypeptide reads, in one-letter code: Ribosomal RNA large subunit methyltransferase G (374 aa).

This sequence belongs to the methyltransferase superfamily. RlmG family.

The protein localises to the cytoplasm. The enzyme catalyses guanosine(1835) in 23S rRNA + S-adenosyl-L-methionine = N(2)-methylguanosine(1835) in 23S rRNA + S-adenosyl-L-homocysteine + H(+). Its function is as follows. Specifically methylates the guanine in position 1835 (m2G1835) of 23S rRNA. The chain is Ribosomal RNA large subunit methyltransferase G from Pseudomonas syringae pv. tomato (strain ATCC BAA-871 / DC3000).